We begin with the raw amino-acid sequence, 463 residues long: Argininosuccinate lyase (463 aa).

Belongs to the lyase 1 family. Argininosuccinate lyase subfamily.

The protein resides in the cytoplasm. The enzyme catalyses 2-(N(omega)-L-arginino)succinate = fumarate + L-arginine. Its pathway is amino-acid biosynthesis; L-arginine biosynthesis; L-arginine from L-ornithine and carbamoyl phosphate: step 3/3. The polypeptide is Argininosuccinate lyase (Thiobacillus denitrificans (strain ATCC 25259 / T1)).